Reading from the N-terminus, the 122-residue chain is Large ribosomal subunit protein bL12 (122 aa).

This sequence belongs to the bacterial ribosomal protein bL12 family. Homodimer. Part of the 50S ribosomal subunit; present in 4 copies per ribosome. Forms part of the ribosomal stalk which helps the ribosome interact with GTP-bound translation factors. Forms a pentameric L10(L12)2(L12)2 complex, where L10 forms an elongated spine to which 2 L12 dimers bind in a sequential fashion.

Its function is as follows. Forms part of the ribosomal stalk which helps the ribosome interact with GTP-bound translation factors. Is thus essential for accurate translation. This Geobacillus stearothermophilus (Bacillus stearothermophilus) protein is Large ribosomal subunit protein bL12.